Consider the following 436-residue polypeptide: Enolase (436 aa).

(2R)-2-phosphoglycerate is bound at residue Gln167. Glu209 (proton donor) is an active-site residue. Residues Asp246, Glu291, and Asp318 each contribute to the Mg(2+) site. (2R)-2-phosphoglycerate is bound by residues Lys343, Arg372, Ser373, and Lys394. Lys343 serves as the catalytic Proton acceptor.

The protein belongs to the enolase family. In terms of assembly, component of the RNA degradosome, a multiprotein complex involved in RNA processing and mRNA degradation. Requires Mg(2+) as cofactor.

Its subcellular location is the cytoplasm. The protein resides in the secreted. It is found in the cell surface. The enzyme catalyses (2R)-2-phosphoglycerate = phosphoenolpyruvate + H2O. Its pathway is carbohydrate degradation; glycolysis; pyruvate from D-glyceraldehyde 3-phosphate: step 4/5. In terms of biological role, catalyzes the reversible conversion of 2-phosphoglycerate (2-PG) into phosphoenolpyruvate (PEP). It is essential for the degradation of carbohydrates via glycolysis. The chain is Enolase from Actinobacillus pleuropneumoniae serotype 5b (strain L20).